Reading from the N-terminus, the 252-residue chain is Probable transcriptional regulatory protein Haur_3030 (252 aa).

Belongs to the TACO1 family.

The protein resides in the cytoplasm. This chain is Probable transcriptional regulatory protein Haur_3030, found in Herpetosiphon aurantiacus (strain ATCC 23779 / DSM 785 / 114-95).